The following is a 111-amino-acid chain: SPbeta prophage-derived uncharacterized protein YopW (111 aa).

The chain is SPbeta prophage-derived uncharacterized protein YopW (yopW) from Bacillus subtilis (strain 168).